The chain runs to 154 residues: Large ribosomal subunit protein uL23 (154 aa).

A disordered region spans residues 1 to 39 (MAPAKADPSKKSDPKAQAAKVAKAVKSGSTLKKKSQKIR). Positions 15–26 (KAQAAKVAKAVK) are enriched in low complexity.

It belongs to the universal ribosomal protein uL23 family.

In terms of biological role, this protein binds to a specific region on the 26S rRNA. This is Large ribosomal subunit protein uL23 (RPL23A) from Nicotiana tabacum (Common tobacco).